A 179-amino-acid chain; its full sequence is MLRFKELYKKKIIESLKKEFSFKNQHEIPQIKKIVINMGVGEAIADSKVINNALNDLTLISGQKPIVTLARKSIATFKLRENMKIGCKVTLRKDRMYDFLERLVIVALPRVKEFRGFSYKSFDGKGNFTFGLKEQIVFPEINYDKIDTIRGMDITIVTSAKTDQESKFLLSGFNLPFYN.

It belongs to the universal ribosomal protein uL5 family. Part of the 50S ribosomal subunit; part of the 5S rRNA/L5/L18/L25 subcomplex. Contacts the 5S rRNA and the P site tRNA. Forms a bridge to the 30S subunit in the 70S ribosome.

Its function is as follows. This is one of the proteins that bind and probably mediate the attachment of the 5S RNA into the large ribosomal subunit, where it forms part of the central protuberance. In the 70S ribosome it contacts protein S13 of the 30S subunit (bridge B1b), connecting the 2 subunits; this bridge is implicated in subunit movement. Contacts the P site tRNA; the 5S rRNA and some of its associated proteins might help stabilize positioning of ribosome-bound tRNAs. This chain is Large ribosomal subunit protein uL5, found in Rickettsia typhi (strain ATCC VR-144 / Wilmington).